The chain runs to 1293 residues: Enterobactin synthase component F (1293 aa).

The segment at 1–301 is elongation/condensation; that stretch reads MSQHLPLVAA…NVLPLGIHIA (301 aa). The adenylatione stretch occupies residues 482–887; that stretch reads SYREMREQVV…ALPDVEQAVT (406 aa). The Carrier domain occupies 971–1046; sequence APKAGSETII…KLATIIDAEE (76 aa). At Ser-1006 the chain carries O-(pantetheine 4'-phosphoryl)serine. The thioesterase stretch occupies residues 1066-1293; that stretch reads PTLFCFHPAS…GPIIRATLNR (228 aa). His-1271 functions as the Proton acceptor; for thioesterase activity in the catalytic mechanism.

Belongs to the ATP-dependent AMP-binding enzyme family. EntF subfamily. In terms of assembly, proteins EntB, EntD, EntE and EntF are the component of the enterobactin synthase. Components probably do not form a stable complex. EntF acts as a catalytic monomer. Interacts with the MbtH-like protein YbdZ. YbdZ binds to the adenylation domain, but does not alter the structure of the domain. It depends on pantetheine 4'-phosphate as a cofactor. Post-translationally, 4'-phosphopantetheine is transferred from CoA to a specific serine of apo-EntF by EntD. Holo-EntF so formed is then acylated with seryl-AMP.

The protein resides in the cytoplasm. It carries out the reaction 3 2,3-dihydroxybenzoate + 3 L-serine + 6 ATP = enterobactin + 6 AMP + 6 diphosphate + 4 H(+). It catalyses the reaction holo-[peptidyl-carrier protein] + L-serine + ATP = L-seryl-[peptidyl-carrier protein] + AMP + diphosphate. It functions in the pathway siderophore biosynthesis; enterobactin biosynthesis. Its activity is regulated as follows. Adenylation activity is increased in the presence of the MbtH-like protein YbdZ. Functionally, involved in the biosynthesis of the siderophore enterobactin (enterochelin), which is a macrocyclic trimeric lactone of N-(2,3-dihydroxybenzoyl)-serine. EntF catalyzes the activation of L-serine via ATP-dependent PPi exchange reaction to form seryladenylate. Activated L-serine is loaded onto the peptidyl carrier domain via a thioester linkage to the phosphopanthetheine moiety, forming seryl-S-Ppant-EntF. EntF acts then as the sole catalyst for the formation of the three amide and three ester linkages found in enterobactin, using seryladenylate and 2,3-dihydroxybenzoate-S-Ppant-EntB (DHB-S-Ppant-EntB) as substrates, via the formation of a DHB-Ser-S-Ppant-EntF intermediate. This is Enterobactin synthase component F from Escherichia coli (strain K12).